Here is a 157-residue protein sequence, read N- to C-terminus: Immediate-early protein ICP-18 (157 aa).

This Frog virus 3 (isolate Goorha) (FV-3) protein is Immediate-early protein ICP-18.